A 285-amino-acid chain; its full sequence is Homeobox protein Hox-A13b (285 aa).

A DNA-binding region (homeobox) is located at residues 219-278 (GRKKRVPYTKVQLKELEREYAANKFITKDKRRRISAQTNLTERQVTIWFQNRRVKEKKVV).

Belongs to the Abd-B homeobox family.

The protein localises to the nucleus. Sequence-specific transcription factor which is part of a developmental regulatory system that provides cells with specific positional identities on the anterior-posterior axis. The chain is Homeobox protein Hox-A13b (hoxa13b) from Takifugu rubripes (Japanese pufferfish).